The following is a 214-amino-acid chain: Adenylate kinase (214 aa).

Position 10 to 15 (10 to 15) interacts with ATP; the sequence is GAGKGT. Residues 30–59 are NMP; sequence STGDMLRAAVKAGSELGLKAKEIMDAGKLV. AMP-binding positions include Thr31, Arg36, 57 to 59, 85 to 88, and Gln92; these read KLV and GFPR. The LID stretch occupies residues 122–159; sequence GRRVHAPSGRVYHVTFNPPRVEGKDDMTGEELTTRKDD. ATP-binding positions include Arg123 and 132 to 133; that span reads VY. AMP-binding residues include Arg156 and Arg167. Residue Arg200 coordinates ATP.

Belongs to the adenylate kinase family. In terms of assembly, monomer.

Its subcellular location is the cytoplasm. The catalysed reaction is AMP + ATP = 2 ADP. It functions in the pathway purine metabolism; AMP biosynthesis via salvage pathway; AMP from ADP: step 1/1. Its function is as follows. Catalyzes the reversible transfer of the terminal phosphate group between ATP and AMP. Plays an important role in cellular energy homeostasis and in adenine nucleotide metabolism. The sequence is that of Adenylate kinase from Erwinia tasmaniensis (strain DSM 17950 / CFBP 7177 / CIP 109463 / NCPPB 4357 / Et1/99).